The sequence spans 538 residues: Lipid scramblase CLPTM1L (538 aa).

Residues 1 to 10 (MWSGRSSFTS) are Cytoplasmic-facing. A helical membrane pass occupies residues 11–31 (LVVGVFVVYVVHTCWVMYGIV). The Extracellular segment spans residues 32–284 (YTRPCSGDAN…VKGIFVDTNL (253 aa)). Asn91, Asn101, and Asn229 each carry an N-linked (GlcNAc...) asparagine glycan. The chain crosses the membrane as a helical span at residues 285–305 (YFLALTFFVAAFHLLFDFLAF). The Cytoplasmic portion of the chain corresponds to 306–324 (KNDISFWKKKKSMIGMSTK). A helical membrane pass occupies residues 325–342 (AVLWRCFSTVVIFLFLLD). The Extracellular portion of the chain corresponds to 343–346 (EQTS). A helical membrane pass occupies residues 347 to 364 (LLVLVPAGVGAAIELWKV). Over 365-402 (KKALKMTIFWRGLMPEFQFGTYSESERKTEEYDTQAMK) the chain is Cytoplasmic. A helical transmembrane segment spans residues 403–423 (YLSYLLYPLCVGGAVYSLLNI). The Extracellular segment spans residues 424-428 (KYKSW). The helical transmembrane segment at 429 to 449 (YSWLINSFVNGVYAFGFLFML) threads the bilayer. Residues 450 to 538 (PQLFVNYKLK…EKATRAPHTD (89 aa)) are Cytoplasmic-facing.

This sequence belongs to the CLPTM1 family. As to expression, ubiquitously expressed.

Its subcellular location is the endoplasmic reticulum membrane. It carries out the reaction a 6-(alpha-D-glucosaminyl)-1-(1,2-diacyl-sn-glycero-3-phospho)-1D-myo-inositol(in) = a 6-(alpha-D-glucosaminyl)-1-(1,2-diacyl-sn-glycero-3-phospho)-1D-myo-inositol(out). The catalysed reaction is 6-(alpha-D-glucosaminyl)-(1-octadecanoyl,2-(9Z)-octadecenoyl-sn-glycero-3-phospho)-1D-myo-inositol(in) = 6-(alpha-D-glucosaminyl)-(1-octadecanoyl,2-(9Z)-octadecenoyl-sn-glycero-3-phospho)-1D-myo-inositol(out). The enzyme catalyses a 1,2-diacyl-sn-glycero-3-phospho-(1D-myo-inositol)(in) = a 1,2-diacyl-sn-glycero-3-phospho-(1D-myo-inositol)(out). It catalyses the reaction a 1,2-diacyl-sn-glycero-3-phosphocholine(in) = a 1,2-diacyl-sn-glycero-3-phosphocholine(out). It carries out the reaction a 1,2-diacyl-sn-glycero-3-phosphoethanolamine(in) = a 1,2-diacyl-sn-glycero-3-phosphoethanolamine(out). In terms of biological role, scramblase that mediates the translocation of glucosaminylphosphatidylinositol (alpha-D-GlcN-(1-6)-(1,2-diacyl-sn-glycero-3-phospho)-1D-myo-inositol, GlcN-PI) across the endoplasmic reticulum (ER) membrane, from the cytosolic leaflet to the luminal leaflet of the ER membrane, where it participates in the biosynthesis of glycosylphosphatidylinositol (GPI). GPI is a lipid glycoconjugate involved in post-translational modification of proteins. Can also translocate 1,2-diacyl-sn-glycero-3-phospho-(1D-myo-inositol) (phosphatidylinositol or PI), as well as several other phospholipids (1,2-diacyl-sn-glycero-3-phosphocholine, 1,2-diacyl-sn-glycero-3-phosphoethanolamine), and N-acetylglucosaminylphosphatidylinositol (GlcNAc-PI) in vitro. This Homo sapiens (Human) protein is Lipid scramblase CLPTM1L (CLPTM1L).